We begin with the raw amino-acid sequence, 462 residues long: Hyaluronidase-1 (462 aa).

An N-terminal signal peptide occupies residues 1–52; it reads MLGLTQHAQKVWRMKPFSPEVSPGSSPATAGHLLRISTLFLTLLELAQVCRG. Disulfide bonds link Cys-71/Cys-361 and Cys-235/Cys-249. Residues Asn-98 and Asn-127 are each glycosylated (N-linked (GlcNAc...) asparagine). Glu-159 functions as the Proton donor in the catalytic mechanism. 3 N-linked (GlcNAc...) asparagine glycosylation sites follow: Asn-244, Asn-265, and Asn-378. Cystine bridges form between Cys-386–Cys-397, Cys-391–Cys-446, and Cys-448–Cys-457. The 12-residue stretch at 446 to 457 folds into the EGF-like domain; sequence CRCYRGWRGKWC.

The protein belongs to the glycosyl hydrolase 56 family. In terms of tissue distribution, highly expressed in liver, kidney, lung and skin.

The protein resides in the secreted. The protein localises to the lysosome. The catalysed reaction is Random hydrolysis of (1-&gt;4)-linkages between N-acetyl-beta-D-glucosamine and D-glucuronate residues in hyaluronate.. Its function is as follows. May have a role in promoting tumor progression. May block the TGFB1-enhanced cell growth. The chain is Hyaluronidase-1 (Hyal1) from Mus musculus (Mouse).